A 358-amino-acid chain; its full sequence is Phospho-N-acetylmuramoyl-pentapeptide-transferase (358 aa).

The next 10 helical transmembrane spans lie at 21–41, 71–91, 95–115, 133–153, 166–186, 197–217, 234–254, 261–281, 286–306, and 337–357; these read YLTL…FVVG, TMGG…WADL, YIWV…VDDY, FWQS…ASVA, VAVN…VGSS, GLAV…AYAA, AGEL…FLWF, VFMG…LAVL, LVLF…MLQV, and IVRF…TLKI.

Belongs to the glycosyltransferase 4 family. MraY subfamily. Mg(2+) serves as cofactor.

Its subcellular location is the cell inner membrane. The catalysed reaction is UDP-N-acetyl-alpha-D-muramoyl-L-alanyl-gamma-D-glutamyl-meso-2,6-diaminopimeloyl-D-alanyl-D-alanine + di-trans,octa-cis-undecaprenyl phosphate = di-trans,octa-cis-undecaprenyl diphospho-N-acetyl-alpha-D-muramoyl-L-alanyl-D-glutamyl-meso-2,6-diaminopimeloyl-D-alanyl-D-alanine + UMP. The protein operates within cell wall biogenesis; peptidoglycan biosynthesis. In terms of biological role, catalyzes the initial step of the lipid cycle reactions in the biosynthesis of the cell wall peptidoglycan: transfers peptidoglycan precursor phospho-MurNAc-pentapeptide from UDP-MurNAc-pentapeptide onto the lipid carrier undecaprenyl phosphate, yielding undecaprenyl-pyrophosphoryl-MurNAc-pentapeptide, known as lipid I. The chain is Phospho-N-acetylmuramoyl-pentapeptide-transferase from Nitrosococcus oceani (strain ATCC 19707 / BCRC 17464 / JCM 30415 / NCIMB 11848 / C-107).